Here is a 733-residue protein sequence, read N- to C-terminus: ATP-dependent RNA helicase MAK5 (733 aa).

The segment at 53–132 (EAQVKEEEES…HEDEKETPED (80 aa)) is disordered. Residues 58 to 99 (EEEESSESDFPDFDAMEQEDDGDVEEAEEEEEEEEDVAEADE) show a composition bias toward acidic residues. The segment covering 100–126 (PEVKQKQEQARVEQIDKGVDSEKHEDE) has biased composition (basic and acidic residues). The Q motif motif lies at 155-183 (GWTDTVDLSMTTINGLSNLGFTEMTPIQK). A Helicase ATP-binding domain is found at 186–376 (IPAALEGKDI…ANSSWKKKNN (191 aa)). Residue 199–206 (ASTGSGKT) participates in ATP binding. Positions 315–318 (DEAD) match the DEAD box motif. Residues 428–594 (DLYCYYFVTL…TVPLLPIEID (167 aa)) enclose the Helicase C-terminal domain.

Belongs to the DEAD box helicase family. DDX24/MAK5 subfamily.

The protein localises to the nucleus. It localises to the nucleolus. The catalysed reaction is ATP + H2O = ADP + phosphate + H(+). ATP-binding RNA helicase involved in the biogenesis of 60S ribosomal subunits and is required for the normal formation of 25S and 5.8S rRNAs. The polypeptide is ATP-dependent RNA helicase MAK5 (MAK5) (Candida glabrata (strain ATCC 2001 / BCRC 20586 / JCM 3761 / NBRC 0622 / NRRL Y-65 / CBS 138) (Yeast)).